Reading from the N-terminus, the 63-residue chain is Large ribosomal subunit protein bL28 (63 aa).

The protein belongs to the bacterial ribosomal protein bL28 family.

This chain is Large ribosomal subunit protein bL28, found in Acidobacterium capsulatum (strain ATCC 51196 / DSM 11244 / BCRC 80197 / JCM 7670 / NBRC 15755 / NCIMB 13165 / 161).